A 310-amino-acid polypeptide reads, in one-letter code: p-hydroxybenzoic acid efflux pump subunit AaeA (310 aa).

The chain crosses the membrane as a helical span at residues 12 to 32; it reads AITVVLVVLAFIAIFRAWSFY.

It belongs to the membrane fusion protein (MFP) (TC 8.A.1) family.

It localises to the cell inner membrane. Its function is as follows. Forms an efflux pump with AaeB. The sequence is that of p-hydroxybenzoic acid efflux pump subunit AaeA from Cronobacter sakazakii (strain ATCC BAA-894) (Enterobacter sakazakii).